Reading from the N-terminus, the 157-residue chain is Large ribosomal subunit protein uL15 (157 aa).

Residues 1–13 (MKLNDLRDKDGAT) show a composition bias toward basic and acidic residues. Positions 1–39 (MKLNDLRDKDGATHSKKRLGRGIGSGSGKTAGRGVKGQK) are disordered. Residues 21 to 35 (RGIGSGSGKTAGRGV) are compositionally biased toward gly residues.

It belongs to the universal ribosomal protein uL15 family. In terms of assembly, part of the 50S ribosomal subunit.

In terms of biological role, binds to the 23S rRNA. The protein is Large ribosomal subunit protein uL15 of Mesorhizobium japonicum (strain LMG 29417 / CECT 9101 / MAFF 303099) (Mesorhizobium loti (strain MAFF 303099)).